A 290-amino-acid polypeptide reads, in one-letter code: Elongation factor Ts, mitochondrial 1 (290 aa).

This sequence belongs to the EF-Ts family.

It is found in the mitochondrion. Associates with the EF-Tu.GDP complex and induces the exchange of GDP to GTP. It remains bound to the aminoacyl-tRNA.EF-Tu.GTP complex up to the GTP hydrolysis stage on the ribosome. The sequence is that of Elongation factor Ts, mitochondrial 1 from Postia placenta (strain ATCC 44394 / Madison 698-R) (Brown rot fungus).